A 1633-amino-acid chain; its full sequence is D-lysergyl-peptide-synthetase subunit 3 (1633 aa).

Residues 80–483 (FRQRCDLHPD…GRKDSQIKIR (404 aa)) are adenylation (A) domain. The Carrier domain maps to 622-691 (EEHRLQRMYS…RLKDLARKAS (70 aa)). S654 is modified (O-(pantetheine 4'-phosphoryl)serine). Residues 836–1127 (PLVRMKLVEG…ILGQIHGKEA (292 aa)) form a condensation (C) domain region. Residues 1256–1483 (VTGASGFIGT…EYNSSAGSEW (228 aa)) are reductase (R) domain.

The protein belongs to the NRP synthetase family.

The protein operates within alkaloid biosynthesis; ergot alkaloid biosynthesis. Its function is as follows. D-lysergyl-peptide-synthetase subunit 3; part of the gene cluster that mediates the biosynthesis of fungal ergot alkaloid. DmaW catalyzes the first step of ergot alkaloid biosynthesis by condensing dimethylallyl diphosphate (DMAP) and tryptophan to form 4-dimethylallyl-L-tryptophan. The second step is catalyzed by the methyltransferase easF that methylates 4-dimethylallyl-L-tryptophan in the presence of S-adenosyl-L-methionine, resulting in the formation of 4-dimethylallyl-L-abrine. The catalase easC and the FAD-dependent oxidoreductase easE then transform 4-dimethylallyl-L-abrine to chanoclavine-I which is further oxidized by easD in the presence of NAD(+), resulting in the formation of chanoclavine-I aldehyde. Agroclavine dehydrogenase easG then mediates the conversion of chanoclavine-I aldehyde to agroclavine via a non-enzymatic adduct reaction: the substrate is an iminium intermediate that is formed spontaneously from chanoclavine-I aldehyde in the presence of glutathione. The presence of easA is not required to complete this reaction. Further conversion of agroclavine to paspalic acid is a two-step process involving oxidation of agroclavine to elymoclavine and of elymoclavine to paspalic acid, the second step being performed by the elymoclavine oxidase cloA. Paspalic acid is then further converted to D-lysergic acid. Ergopeptines are assembled from D-lysergic acid and three different amino acids by the D-lysergyl-peptide-synthetases composed each of a monomudular and a trimodular nonribosomal peptide synthetase subunit. LpsB and lpsC encode the monomodular subunits responsible for D-lysergic acid activation and incorporation into the ergopeptine backbone. LpsA1 and A2 subunits encode the trimodular nonribosomal peptide synthetase assembling the tripeptide portion of ergopeptines. LpsA1 is responsible for formation of the major ergopeptine, ergotamine, and lpsA2 for alpha-ergocryptine, the minor ergopeptine of the total alkaloid mixture elaborated by C.purpurea. D-lysergyl-tripeptides are assembled by the nonribosomal peptide synthetases and released as N-(D-lysergyl-aminoacyl)-lactams. Cyclolization of the D-lysergyl-tripeptides is performed by the Fe(2+)/2-ketoglutarate-dependent dioxygenase easH which introduces a hydroxyl group into N-(D-lysergyl-aminoacyl)-lactam at alpha-C of the aminoacyl residue followed by spontaneous condensation with the terminal lactam carbonyl group. In Claviceps purpurea (Ergot fungus), this protein is D-lysergyl-peptide-synthetase subunit 3.